The chain runs to 438 residues: Enolase (438 aa).

Residues histidine 159 and glutamate 168 each contribute to the substrate site. The Proton donor role is filled by glutamate 211. The Mg(2+) site is built by aspartate 246, glutamate 297, and aspartate 322. Positions 297 and 322 each coordinate substrate. Lysine 347 functions as the Proton acceptor in the catalytic mechanism. Substrate contacts are provided by residues 374–377 (SHRS) and lysine 398.

It belongs to the enolase family. As to quaternary structure, homodimer. Requires Mg(2+) as cofactor.

It is found in the cytoplasm. The enzyme catalyses (2R)-2-phosphoglycerate = phosphoenolpyruvate + H2O. It participates in carbohydrate degradation; glycolysis; pyruvate from D-glyceraldehyde 3-phosphate: step 4/5. This is Enolase (enoA) from Aspergillus fumigatus (strain ATCC MYA-4609 / CBS 101355 / FGSC A1100 / Af293) (Neosartorya fumigata).